The following is a 261-amino-acid chain: MLICNDKFNPKTLLEEIMALRPWRKGPFEISQIKIDSEWDSSIKWDLVKNATPLKDKVVADVGCNNGYYLFKMLEHKPKSLVGFDPGVLVKKQFEFLAPFFDKEKKIIYESLGVEDFHEKYPNAFDVIFCLGVLYHRKSPLEALKALYHALKIKGELVLDTLIIDSPLDIALCPKKTYAKMKNVYFIPSVSALKGWCERVGFENFEILSVLKTTPKEQRKTDFILGQSLEDFLDKTDHSKTLEGYDAPLRGYFKMLKPSKR.

Residues lysine 25, tryptophan 39, lysine 44, glycine 63, 114–115, tyrosine 135, and arginine 250 each bind carboxy-S-adenosyl-L-methionine; that span reads VE.

Belongs to the class I-like SAM-binding methyltransferase superfamily. CmoB family. Homotetramer.

The catalysed reaction is carboxy-S-adenosyl-L-methionine + 5-hydroxyuridine(34) in tRNA = 5-carboxymethoxyuridine(34) in tRNA + S-adenosyl-L-homocysteine + H(+). Functionally, catalyzes carboxymethyl transfer from carboxy-S-adenosyl-L-methionine (Cx-SAM) to 5-hydroxyuridine (ho5U) to form 5-carboxymethoxyuridine (cmo5U) at position 34 in tRNAs. The sequence is that of tRNA U34 carboxymethyltransferase from Helicobacter pylori (strain J99 / ATCC 700824) (Campylobacter pylori J99).